Consider the following 153-residue polypeptide: Ribosome maturation factor RimP (153 aa).

This sequence belongs to the RimP family.

It is found in the cytoplasm. Its function is as follows. Required for maturation of 30S ribosomal subunits. This is Ribosome maturation factor RimP from Rippkaea orientalis (strain PCC 8801 / RF-1) (Cyanothece sp. (strain PCC 8801)).